The following is a 393-amino-acid chain: Protein DDI1 homolog 2 (393 aa).

Residues 1-81 enclose the Ubiquitin-like domain; that stretch reads MLITVYCVRR…VILRQKEAPE (81 aa). The interval 82–127 is disordered; that stretch reads TRPAAPFPGLDFSTIAVPGASSQPDPSQPQAPPPPPDTSSFPQGLD. A compositionally biased stretch (pro residues) spans 107-118; sequence PSQPQAPPPPPD. Residue Asp-246 is part of the active site. The Ubiquitin-binding signature appears at 370–389; that stretch reads EEIADRELAEVLQKSADEAD.

It belongs to the DDI1 family. In terms of assembly, homodimer.

The protein localises to the cytoplasm. Its subcellular location is the cytosol. It is found in the chromosome. Aspartic protease that mediates the cleavage of NFE2L1/NRF1 at 'Leu-104', thereby promoting release of NFE2L1/NRF1 from the endoplasmic reticulum membrane. Ubiquitination of NFE2L1/NRF1 is a prerequisite for cleavage, suggesting that DDI2 specifically recognizes and binds ubiquitinated NFE2L1/NRF1. Seems to act as a proteasomal shuttle which links the proteasome and replication fork proteins like RTF2. Required for cellular survival following replication stress. In Xenopus laevis (African clawed frog), this protein is Protein DDI1 homolog 2 (ddi2).